We begin with the raw amino-acid sequence, 179 residues long: Large ribosomal subunit protein uL5 (179 aa).

Belongs to the universal ribosomal protein uL5 family. As to quaternary structure, part of the 50S ribosomal subunit; part of the 5S rRNA/L5/L18/L25 subcomplex. Contacts the 5S rRNA and the P site tRNA. Forms a bridge to the 30S subunit in the 70S ribosome.

This is one of the proteins that bind and probably mediate the attachment of the 5S RNA into the large ribosomal subunit, where it forms part of the central protuberance. In the 70S ribosome it contacts protein S13 of the 30S subunit (bridge B1b), connecting the 2 subunits; this bridge is implicated in subunit movement. Contacts the P site tRNA; the 5S rRNA and some of its associated proteins might help stabilize positioning of ribosome-bound tRNAs. The polypeptide is Large ribosomal subunit protein uL5 (Paramagnetospirillum magneticum (strain ATCC 700264 / AMB-1) (Magnetospirillum magneticum)).